A 1238-amino-acid polypeptide reads, in one-letter code: Receptor-type tyrosine-protein phosphatase eta (1238 aa).

The signal sequence occupies residues 1-28 (MKPAARETRTPPRSPGLRWALLPLLLLL). The Extracellular segment spans residues 29–876 (RQGQVLCAGA…LPQDPGVICG (848 aa)). The 84-residue stretch at 39 to 122 (APNPIFDIEA…LNKTITTEPW (84 aa)) folds into the Fibronectin type-III 1 domain. N-linked (GlcNAc...) asparagine glycosylation is found at Asn-62, Asn-78, Asn-85, Asn-90, Asn-110, Asn-114, Asn-145, Asn-164, Asn-173, Asn-182, Asn-198, Asn-207, Asn-244, Asn-253, Asn-267, Asn-278, Asn-313, Asn-317, Asn-333, Asn-366, Asn-379, Asn-398, Asn-403, Asn-437, Asn-452, Asn-488, Asn-506, Asn-538, Asn-572, Asn-576, Asn-662, Asn-668, Asn-685, Asn-691, Asn-725, Asn-811, and Asn-838. The Fibronectin type-III 2 domain maps to 170–266 (PGTNNSFAFP…GQPRNKVFKT (97 aa)). 6 Fibronectin type-III domains span residues 270–358 (QVSD…SPDQ), 359–443 (VSDF…TDPS), 444–527 (AVTD…TQYT), 528–621 (RPSS…TEPE), 622–718 (PVTS…TDPP), and 717–803 (PPTP…SEVL). Residues 877 to 897 (AVFGCIFGALAITAVGGFIFW) traverse the membrane as a helical segment. At 898 to 1238 (RKKRTDAKNN…MFGKTNGYIA (341 aa)) the chain is on the cytoplasmic side. Position 910 is a phosphoserine (Ser-910). Residues 942-1199 (FAEEYEDLKL…VFLNQCVLDI (258 aa)) form the Tyrosine-protein phosphatase domain. Substrate is bound by residues Asp-1106, 1140–1146 (CSAGVGR), and Gln-1184. Cys-1140 (phosphocysteine intermediate) is an active-site residue.

This sequence belongs to the protein-tyrosine phosphatase family. Receptor class 3 subfamily. In terms of assembly, monomer. Interacts with CTNNB1 (phosphorylated) and JUP (phosphorylated). Interacts with FLT3 (phosphorylated). Interacts with GAB1 and GRB2. In terms of tissue distribution, expressed at high levels in brain, kidney, spleen and intestine, and at lower levels in liver, lung, thymus and heart. Expressed at a high level in the myeloid cell line FDC-P2, and at a lower level in the pre-B lymphoid cell line WEHI-231 and the T hybridoma cell line HB21.7.31. Not expressed in the fibroblast cell line NIH3T3 or the erythroid cell line F5-5. Expressed in macrophages.

It is found in the cell membrane. Its subcellular location is the cell projection. The protein resides in the ruffle membrane. It localises to the cell junction. The enzyme catalyses O-phospho-L-tyrosyl-[protein] + H2O = L-tyrosyl-[protein] + phosphate. Functionally, tyrosine phosphatase which dephosphorylates or contributes to the dephosphorylation of CTNND1, FLT3, PDGFRB, MET, KDR, LYN, SRC, MAPK1, MAPK3, EGFR, TJP1, OCLN, PIK3R1 and PIK3R2. Plays a role in cell adhesion, migration, proliferation and differentiation. Has a role in megakaryocytes and platelet formation. Involved in vascular development. May be involved in the mechanism of contact inhibition of cell growth. Regulator of macrophage adhesion and spreading. Positively affects cell-matrix adhesion. Positive regulator of platelet activation and thrombosis. Negative regulator of cell proliferation. Negative regulator of PDGF-stimulated cell migration; through dephosphorylation of PDGFR. Positive regulator of endothelial cell survival, as well as of VEGF-induced SRC and AKT activation; through KDR dephosphorylation. Negative regulator of EGFR signaling pathway; through EGFR dephosphorylation. Enhances the barrier function of epithelial junctions during reassembly. Negatively regulates T-cell receptor (TCR) signaling. Upon T-cell TCR activation, it is up-regulated and excluded from the immunological synapses, while upon T-cell-antigen presenting cells (APC) disengagement, it is no longer excluded and can dephosphorylate PLCG1 and LAT to down-regulate prolongation of signaling. In Mus musculus (Mouse), this protein is Receptor-type tyrosine-protein phosphatase eta (Ptprj).